A 157-amino-acid chain; its full sequence is MKCPYCSSPDSRVINSRPSDDGASIRRRRECLTCTRRFTTYERAQLEPLMVVKRSGVREAFNPDKLLRGLALASEKRPVEEAALRTFAYSFEDEVQGGEIPTEEIGRRAMTFLRPLDDVAYIRFASVYRDFDSLERFIEEIRGLKGHEDEAPKSDPA.

Positions 1-22 (MKCPYCSSPDSRVINSRPSDDG) are disordered. The segment at 3–34 (CPYCSSPDSRVINSRPSDDGASIRRRRECLTC) is a zinc-finger region. Residues 8–17 (SPDSRVINSR) are compositionally biased toward polar residues. The ATP-cone domain occupies 49–136 (LMVVKRSGVR…VYRDFDSLER (88 aa)).

Belongs to the NrdR family. Requires Zn(2+) as cofactor.

In terms of biological role, negatively regulates transcription of bacterial ribonucleotide reductase nrd genes and operons by binding to NrdR-boxes. The chain is Transcriptional repressor NrdR from Deinococcus radiodurans (strain ATCC 13939 / DSM 20539 / JCM 16871 / CCUG 27074 / LMG 4051 / NBRC 15346 / NCIMB 9279 / VKM B-1422 / R1).